A 527-amino-acid polypeptide reads, in one-letter code: MSGDQGQAGAKRPIRRALISVYDKTGLIDLARGLHEAGVDIVSTGSTAKTIADKGIPVTPVEFVTGFPEVLDGRVKTLHPHIHAGLLADTRKPEHVEALAKLGIAPFDLVVVNLYPFSETVESGASVDECVEQIDIGGPSMVRAAAKNHPSVAVVVEPNGYDGVLAAVRTGGFTLAERKILASLAFRHTAEYDVAVASWMGSTLAPEEPAQKLPAWVGGTWRRAAVLRYGENPHQQAALYRDATAWPGLAQAEQLHGKEMSYNNYTDADAAWRAAFDHEEICVAIIKHANPCGIAISSVSVADAHRKAHECDPLSAFGGVIATNSSVSVEMAETVADIFTEVIVAPAYEPGAVEILSRKKNIRILVAAQPPTTGTELRPISGGLLLQQRDALDADGDDPVNWTLATGEPADPATLANLKFAWRSCRAVKSNAIVVVADGATVGVGMGQVNRVDAARLAVQRAGDRVRGAVAASDAFFPFPDGLETLTEAGVKAIVHPGGSMRDDVVTEAAAKAGISLYLTGARHFAH.

The MGS-like domain maps to 8-156 (AGAKRPIRRA…KNHPSVAVVV (149 aa)).

This sequence belongs to the PurH family.

The catalysed reaction is (6R)-10-formyltetrahydrofolate + 5-amino-1-(5-phospho-beta-D-ribosyl)imidazole-4-carboxamide = 5-formamido-1-(5-phospho-D-ribosyl)imidazole-4-carboxamide + (6S)-5,6,7,8-tetrahydrofolate. It carries out the reaction IMP + H2O = 5-formamido-1-(5-phospho-D-ribosyl)imidazole-4-carboxamide. Its pathway is purine metabolism; IMP biosynthesis via de novo pathway; 5-formamido-1-(5-phospho-D-ribosyl)imidazole-4-carboxamide from 5-amino-1-(5-phospho-D-ribosyl)imidazole-4-carboxamide (10-formyl THF route): step 1/1. The protein operates within purine metabolism; IMP biosynthesis via de novo pathway; IMP from 5-formamido-1-(5-phospho-D-ribosyl)imidazole-4-carboxamide: step 1/1. In Mycobacterium sp. (strain KMS), this protein is Bifunctional purine biosynthesis protein PurH.